We begin with the raw amino-acid sequence, 225 residues long: Uridine kinase (225 aa).

An ATP-binding site is contributed by 12 to 19; it reads GGTGAGKT.

It belongs to the uridine kinase family.

The protein resides in the cytoplasm. The catalysed reaction is uridine + ATP = UMP + ADP + H(+). The enzyme catalyses cytidine + ATP = CMP + ADP + H(+). It functions in the pathway pyrimidine metabolism; CTP biosynthesis via salvage pathway; CTP from cytidine: step 1/3. It participates in pyrimidine metabolism; UMP biosynthesis via salvage pathway; UMP from uridine: step 1/1. The chain is Uridine kinase from Halobacterium salinarum (strain ATCC 700922 / JCM 11081 / NRC-1) (Halobacterium halobium).